Reading from the N-terminus, the 467-residue chain is Tubulointerstitial nephritis antigen-like (467 aa).

An N-terminal signal peptide occupies residues 1-21 (MWGCPLGLLLLLLAGQAALEA). One can recognise an SMB domain in the interval 49–96 (EQDMCCRGRADECALPYLGATCYCDLFCNRTVSDCCPDFWDFCLGIPP). Disulfide bonds link C53–C72, C70–C72, C70–C84, C76–C83, and C84–C91. N-linked (GlcNAc...) asparagine glycosylation is present at N77. N160 carries an N-linked (GlcNAc...) asparagine glycan.

It belongs to the peptidase C1 family. Post-translationally, glycosylated.

The protein resides in the secreted. In terms of biological role, may be implicated in the adrenocortical zonation and in mechanisms for repressing the CYP11B1 gene expression in adrenocortical cells. This is a non catalytic peptidase C1 family protein. The chain is Tubulointerstitial nephritis antigen-like (Tinagl1) from Rattus norvegicus (Rat).